Reading from the N-terminus, the 109-residue chain is RNA-binding protein Hfq (109 aa).

A Sm domain is found at 9–68 (DPFLNALRKEKVNVSVYLVNGIKLQGQVEAFDQFCIVLRNTVNQMVYKHAISTIVPAKSV). The tract at residues 77–109 (PYHQNSNDEQDENVDDIHSDDLEIQENEGNIHE) is disordered.

It belongs to the Hfq family. As to quaternary structure, homohexamer.

RNA chaperone that binds small regulatory RNA (sRNAs) and mRNAs to facilitate mRNA translational regulation in response to envelope stress, environmental stress and changes in metabolite concentrations. Also binds with high specificity to tRNAs. In Francisella tularensis subsp. mediasiatica (strain FSC147), this protein is RNA-binding protein Hfq.